Here is a 123-residue protein sequence, read N- to C-terminus: Protein HesB, vegetative (123 aa).

The protein belongs to the HesB/IscA family.

In terms of biological role, may be required for efficient nitrogen fixation. This Trichormus variabilis (strain ATCC 29413 / PCC 7937) (Anabaena variabilis) protein is Protein HesB, vegetative (hesB2).